Here is a 178-residue protein sequence, read N- to C-terminus: GTP-dependent dephospho-CoA kinase (178 aa).

Positions 48, 49, 67, 69, and 126 each coordinate GTP.

The protein belongs to the GTP-dependent DPCK family.

The enzyme catalyses 3'-dephospho-CoA + GTP = GDP + CoA + H(+). It functions in the pathway cofactor biosynthesis; coenzyme A biosynthesis. Its function is as follows. Catalyzes the GTP-dependent phosphorylation of the 3'-hydroxyl group of dephosphocoenzyme A to form coenzyme A (CoA). The protein is GTP-dependent dephospho-CoA kinase of Methanothrix thermoacetophila (strain DSM 6194 / JCM 14653 / NBRC 101360 / PT) (Methanosaeta thermophila).